Here is a 392-residue protein sequence, read N- to C-terminus: NAD(P)H-quinone oxidoreductase subunit H, chloroplastic (392 aa).

This sequence belongs to the complex I 49 kDa subunit family. In terms of assembly, NDH is composed of at least 16 different subunits, 5 of which are encoded in the nucleus.

The protein localises to the plastid. The protein resides in the chloroplast thylakoid membrane. It catalyses the reaction a plastoquinone + NADH + (n+1) H(+)(in) = a plastoquinol + NAD(+) + n H(+)(out). The catalysed reaction is a plastoquinone + NADPH + (n+1) H(+)(in) = a plastoquinol + NADP(+) + n H(+)(out). NDH shuttles electrons from NAD(P)H:plastoquinone, via FMN and iron-sulfur (Fe-S) centers, to quinones in the photosynthetic chain and possibly in a chloroplast respiratory chain. The immediate electron acceptor for the enzyme in this species is believed to be plastoquinone. Couples the redox reaction to proton translocation, and thus conserves the redox energy in a proton gradient. This chain is NAD(P)H-quinone oxidoreductase subunit H, chloroplastic, found in Marchantia polymorpha (Common liverwort).